Consider the following 221-residue polypeptide: Redox-sensing transcriptional repressor Rex (221 aa).

The segment at residues 17-56 (IYYYYLSSLHEAGIKRINSTEISEAIKFDAATVRRDFSYF) is a DNA-binding region (H-T-H motif). Residue 91–96 (GTGNLG) coordinates NAD(+).

This sequence belongs to the transcriptional regulatory Rex family. In terms of assembly, homodimer.

The protein localises to the cytoplasm. In terms of biological role, modulates transcription in response to changes in cellular NADH/NAD(+) redox state. The chain is Redox-sensing transcriptional repressor Rex from Oenococcus oeni (strain ATCC BAA-331 / PSU-1).